Here is a 37-residue protein sequence, read N- to C-terminus: Large ribosomal subunit protein bL36 (37 aa).

Belongs to the bacterial ribosomal protein bL36 family.

This Oleidesulfovibrio alaskensis (strain ATCC BAA-1058 / DSM 17464 / G20) (Desulfovibrio alaskensis) protein is Large ribosomal subunit protein bL36 (rpmJ).